We begin with the raw amino-acid sequence, 90 residues long: Probable Fe(2+)-trafficking protein (90 aa).

Belongs to the Fe(2+)-trafficking protein family.

In terms of biological role, could be a mediator in iron transactions between iron acquisition and iron-requiring processes, such as synthesis and/or repair of Fe-S clusters in biosynthetic enzymes. The sequence is that of Probable Fe(2+)-trafficking protein from Pseudomonas aeruginosa (strain UCBPP-PA14).